The sequence spans 711 residues: Long-chain-fatty-acid--CoA ligase 4 (711 aa).

A helical; Signal-anchor for type III membrane protein transmembrane segment spans residues 8-28; it reads LTIVLLPVHLLITIYSALIFI. Residues 29–711 are Cytoplasmic-facing; it reads PWYFLTNAKK…KDIERMYGGK (683 aa). The residue at position 447 (serine 447) is a Phosphoserine.

The protein belongs to the ATP-dependent AMP-binding enzyme family. The cofactor is Mg(2+).

Its subcellular location is the mitochondrion outer membrane. It localises to the peroxisome membrane. The protein localises to the microsome membrane. It is found in the endoplasmic reticulum membrane. The protein resides in the cell membrane. The catalysed reaction is a long-chain fatty acid + ATP + CoA = a long-chain fatty acyl-CoA + AMP + diphosphate. The enzyme catalyses (5Z,8Z,11Z,14Z)-eicosatetraenoate + ATP + CoA = (5Z,8Z,11Z,14Z)-eicosatetraenoyl-CoA + AMP + diphosphate. It catalyses the reaction 15-hydroxy-(5Z,8Z,11Z,13E)-eicosatetraenoate + ATP + CoA = 15-hydroxy-(5Z,8Z,11Z,13E)-eicosatetraenoyl-CoA + AMP + diphosphate. It carries out the reaction 12-hydroxy-(5Z,8Z,10E,14Z)-eicosatetraenoate + ATP + CoA = 12-hydroxy-(5Z,8Z,10E,14Z)-eicosatetraenoyl-CoA + AMP + diphosphate. The catalysed reaction is 5-hydroxy-(6E,8Z,11Z,14Z)-eicosatetraenoate + ATP + CoA = 5-hydroxy-(6E,8Z,11Z,14Z)-eicosatetraenoyl-CoA + AMP + diphosphate. The enzyme catalyses 5,6-epoxy-(8Z,11Z,14Z)-eicosatrienoate + ATP + CoA = 5,6-epoxy-(8Z,11Z,14Z)-eicosatrienoyl-CoA + AMP + diphosphate. It catalyses the reaction 14,15-epoxy-(5Z,8Z,11Z)-eicosatrienoate + ATP + CoA = 14,15-epoxy-(5Z,8Z,11Z)-eicosatrienoyl-CoA + AMP + diphosphate. It carries out the reaction 11,12-epoxy-(5Z,8Z,14Z)-eicosatrienoate + ATP + CoA = 11,12-epoxy-(5Z,8Z,14Z)-eicosatrienoyl-CoA + AMP + diphosphate. The catalysed reaction is 8,9-epoxy-(5Z,11Z,14Z)-eicosatrienoate + ATP + CoA = 8,9-epoxy-(5Z,11Z,14Z)-eicosatrienoyl-CoA + AMP + diphosphate. The enzyme catalyses hexadecanoate + ATP + CoA = hexadecanoyl-CoA + AMP + diphosphate. It catalyses the reaction (E)-hexadec-2-enoate + ATP + CoA = (2E)-hexadecenoyl-CoA + AMP + diphosphate. Its activity is regulated as follows. Both triacsin C and rosiglitazone inhibit arachidonoyl-CoA ligase activity. Its function is as follows. Catalyzes the conversion of long-chain fatty acids to their active form acyl-CoA for both synthesis of cellular lipids, and degradation via beta-oxidation. Preferentially activates arachidonate and eicosapentaenoate as substrates. Preferentially activates 8,9-EET &gt; 14,15-EET &gt; 5,6-EET &gt; 11,12-EET. Modulates glucose-stimulated insulin secretion by regulating the levels of unesterified EETs. Modulates prostaglandin E2 secretion. The sequence is that of Long-chain-fatty-acid--CoA ligase 4 (Acsl4) from Rattus norvegicus (Rat).